The following is a 152-amino-acid chain: MSENILIVHENKKARFDYTIVETYEAGLQLMGSEVKSLRNKDVQLKDSYISFKGDEAYLQNAHIAEYKASSYNNHVPERHRKLLMHRNELDEIFEALREKGYSCVPLKIYFKNGRAKLQIALVKGKKTHDKREAIKKRDVSDQIRSSLRRSR.

The span at 132–142 (REAIKKRDVSD) shows a compositional bias: basic and acidic residues. A disordered region spans residues 132 to 152 (REAIKKRDVSDQIRSSLRRSR).

It belongs to the SmpB family.

The protein localises to the cytoplasm. Required for rescue of stalled ribosomes mediated by trans-translation. Binds to transfer-messenger RNA (tmRNA), required for stable association of tmRNA with ribosomes. tmRNA and SmpB together mimic tRNA shape, replacing the anticodon stem-loop with SmpB. tmRNA is encoded by the ssrA gene; the 2 termini fold to resemble tRNA(Ala) and it encodes a 'tag peptide', a short internal open reading frame. During trans-translation Ala-aminoacylated tmRNA acts like a tRNA, entering the A-site of stalled ribosomes, displacing the stalled mRNA. The ribosome then switches to translate the ORF on the tmRNA; the nascent peptide is terminated with the 'tag peptide' encoded by the tmRNA and targeted for degradation. The ribosome is freed to recommence translation, which seems to be the essential function of trans-translation. This is SsrA-binding protein from Bdellovibrio bacteriovorus (strain ATCC 15356 / DSM 50701 / NCIMB 9529 / HD100).